The sequence spans 815 residues: Translation initiation factor IF-2 (815 aa).

One can recognise a tr-type G domain in the interval 315 to 482 (ARPPVVTIMG…AISLTAEVLE (168 aa)). Residues 324-331 (GHVDHGKT) are G1. Residue 324 to 331 (GHVDHGKT) participates in GTP binding. The segment at 349-353 (GITQH) is G2. The G3 stretch occupies residues 370–373 (DTPG). GTP contacts are provided by residues 370-374 (DTPGH) and 424-427 (NKID). The interval 424–427 (NKID) is G4. The G5 stretch occupies residues 460–462 (SAY).

It belongs to the TRAFAC class translation factor GTPase superfamily. Classic translation factor GTPase family. IF-2 subfamily.

Its subcellular location is the cytoplasm. Its function is as follows. One of the essential components for the initiation of protein synthesis. Protects formylmethionyl-tRNA from spontaneous hydrolysis and promotes its binding to the 30S ribosomal subunits. Also involved in the hydrolysis of GTP during the formation of the 70S ribosomal complex. The polypeptide is Translation initiation factor IF-2 (Ruthia magnifica subsp. Calyptogena magnifica).